Reading from the N-terminus, the 252-residue chain is Imidazole glycerol phosphate synthase subunit HisF (252 aa).

Catalysis depends on residues Asp-13 and Asp-132.

This sequence belongs to the HisA/HisF family. Heterodimer of HisH and HisF.

The protein resides in the cytoplasm. The enzyme catalyses 5-[(5-phospho-1-deoxy-D-ribulos-1-ylimino)methylamino]-1-(5-phospho-beta-D-ribosyl)imidazole-4-carboxamide + L-glutamine = D-erythro-1-(imidazol-4-yl)glycerol 3-phosphate + 5-amino-1-(5-phospho-beta-D-ribosyl)imidazole-4-carboxamide + L-glutamate + H(+). It participates in amino-acid biosynthesis; L-histidine biosynthesis; L-histidine from 5-phospho-alpha-D-ribose 1-diphosphate: step 5/9. IGPS catalyzes the conversion of PRFAR and glutamine to IGP, AICAR and glutamate. The HisF subunit catalyzes the cyclization activity that produces IGP and AICAR from PRFAR using the ammonia provided by the HisH subunit. This Campylobacter hominis (strain ATCC BAA-381 / DSM 21671 / CCUG 45161 / LMG 19568 / NCTC 13146 / CH001A) protein is Imidazole glycerol phosphate synthase subunit HisF.